Reading from the N-terminus, the 311-residue chain is Taste receptor type 2 member 9 (311 aa).

The Extracellular segment spans residues 1–9 (MPSTIEAIY). The helical transmembrane segment at 10–32 (IILIAGELTIGIWGNGFIVLVNC) threads the bilayer. Residues 33–52 (IDWLKRRDVSLIDIILISLA) lie on the Cytoplasmic side of the membrane. Residues 53–72 (ISRICLLCVISLDGFFILLF) traverse the membrane as a helical segment. The Extracellular segment spans residues 73-86 (PGTYDINVLESIMD). Residues 87–109 (AVWTFANNSSLWFTSCLSIFYLL) traverse the membrane as a helical segment. The Cytoplasmic segment spans residues 110-128 (KIANISHPFFFWLKLKINK). The helical transmembrane segment at 129-146 (VILAILLGSFLISLIISF) threads the bilayer. Residues 147-179 (PINGXWYHLFKVSHEENITWAFKVSTIPGAFKQ) are Extracellular-facing. N-linked (GlcNAc...) asparagine glycosylation is present at N163. Residues 180 to 202 (LTLNLGAMVPFMLCLISFFLLLF) traverse the membrane as a helical segment. The Cytoplasmic segment spans residues 203 to 233 (SLVRHTKQIQLHATGLRDPSTEAHMRAIKAV). A helical transmembrane segment spans residues 234–256 (IIFLLLLIVYYPVFLVMTSSTLI). Residues 257-260 (PQGK) are Extracellular-facing. A helical transmembrane segment spans residues 261–283 (LVLMIGDIVTVIFPSSHSFILIM). Residues 284-311 (GNSKLREAFLKMLRFVKGFLRRRKPFGP) lie on the Cytoplasmic side of the membrane.

This sequence belongs to the G-protein coupled receptor T2R family.

It localises to the membrane. Gustducin-coupled receptor implicated in the perception of bitter compounds in the oral cavity and the gastrointestinal tract. Signals through PLCB2 and the calcium-regulated cation channel TRPM5. This Papio hamadryas (Hamadryas baboon) protein is Taste receptor type 2 member 9 (TAS2R9).